Here is a 496-residue protein sequence, read N- to C-terminus: UDP-glycosyltransferase 73C2 (496 aa).

Residues Ser-297, 357-359, 374-382, and 396-399 each bind UDP-alpha-D-glucose; these read SPQ, HCGWNSTLE, and FGDQ.

This sequence belongs to the UDP-glycosyltransferase family.

This is UDP-glycosyltransferase 73C2 (UGT73C2) from Arabidopsis thaliana (Mouse-ear cress).